The primary structure comprises 104 residues: ESAT-6-like protein (104 aa).

Residues 12–43 (MAQAAQDIEQSANAIRGMQNQLASAKDQLRSH) are a coiled coil.

This sequence belongs to the WXG100 family. CFP-10 subfamily. As to quaternary structure, in isolation forms a homodimer. Forms a tight 1:1 complex with EsxA. Forms a complex with EsxA and EccC, probably wholly mediated by EsxB; binds in a pocket in the third FtsK (ATPase) domain of EccC (residues 1163-1208).

Its subcellular location is the secreted. In terms of biological role, may help regulate assembly and function of the type VII secretion system (T7SS). Binds to EccC and induces its multimerization. May serve as a chaperone for EsxA. In Thermomonospora curvata (strain ATCC 19995 / DSM 43183 / JCM 3096 / KCTC 9072 / NBRC 15933 / NCIMB 10081 / Henssen B9), this protein is ESAT-6-like protein.